A 141-amino-acid polypeptide reads, in one-letter code: ATP synthase epsilon chain (141 aa).

This sequence belongs to the ATPase epsilon chain family. F-type ATPases have 2 components, CF(1) - the catalytic core - and CF(0) - the membrane proton channel. CF(1) has five subunits: alpha(3), beta(3), gamma(1), delta(1), epsilon(1). CF(0) has three main subunits: a, b and c.

It localises to the cell inner membrane. In terms of biological role, produces ATP from ADP in the presence of a proton gradient across the membrane. The sequence is that of ATP synthase epsilon chain from Chromohalobacter salexigens (strain ATCC BAA-138 / DSM 3043 / CIP 106854 / NCIMB 13768 / 1H11).